The primary structure comprises 156 residues: Small ribosomal subunit protein uS7 (156 aa).

This sequence belongs to the universal ribosomal protein uS7 family. Part of the 30S ribosomal subunit. Contacts proteins S9 and S11.

In terms of biological role, one of the primary rRNA binding proteins, it binds directly to 16S rRNA where it nucleates assembly of the head domain of the 30S subunit. Is located at the subunit interface close to the decoding center, probably blocks exit of the E-site tRNA. The chain is Small ribosomal subunit protein uS7 from Geobacter sulfurreducens (strain ATCC 51573 / DSM 12127 / PCA).